Reading from the N-terminus, the 127-residue chain is UPF0102 protein Reut_A3265 (127 aa).

Belongs to the UPF0102 family.

In Cupriavidus pinatubonensis (strain JMP 134 / LMG 1197) (Cupriavidus necator (strain JMP 134)), this protein is UPF0102 protein Reut_A3265.